We begin with the raw amino-acid sequence, 1822 residues long: Signal-induced proliferation-associated 1-like protein 1 (1822 aa).

Disordered regions lie at residues 1–30 (MTSLKRSQTERPVTADRASVVSTDGTPKVH) and 47–125 (GSSV…VSLN). Over residues 84 to 94 (PPRKENVKESS) the composition is skewed to basic and acidic residues. The segment covering 95-125 (RSSQEIETSSCLESLSSKGSPVSQGSSVSLN) has biased composition (low complexity). Serine 162, serine 187, serine 193, serine 208, serine 255, and serine 288 each carry phosphoserine. The segment at 277–297 (EREKPLKRRSKSETGDSSIFR) is disordered. The Rap-GAP domain maps to 638–855 (FMKLDEQGLN…RTRQEYLKDL (218 aa)). A PDZ domain is found at 992–1068 (EMTLRRNGLG…VKVVIIPPHD (77 aa)). Phosphoserine is present on residues serine 1117, serine 1126, serine 1155, serine 1166, serine 1188, serine 1209, and serine 1220. A disordered region spans residues 1134 to 1165 (AGKGDGKMPLPERAANIPRSISSDGRPLERRL). A disordered region spans residues 1183-1252 (SQCRNSPSNL…WQRSEDSLAD (70 aa)). Residues 1188–1198 (SPSNLSSSSET) show a composition bias toward low complexity. Polar residues predominate over residues 1225–1244 (DRQNTQSDIGGSGKSTPSWQ). Serine 1273 and serine 1288 each carry phosphoserine. Positions 1286 to 1324 (HLSPNKQGHSDSHYSSHSSSNTLSSNASSAHSDEKWYDG) are disordered. Over residues 1300 to 1315 (SSHSSSNTLSSNASSA) the composition is skewed to low complexity. Serine 1344 is subject to Phosphoserine; by PLK2. Threonine 1348 is modified (phosphothreonine; by PLK2). Residues 1358 to 1367 (TASLGASTSS) are compositionally biased toward low complexity. The segment at 1358 to 1382 (TASLGASTSSPRSGPGKEKVAPLWH) is disordered. Serine 1367 is modified (phosphoserine; by CDK5). Serine 1384 is subject to Phosphoserine. A compositionally biased stretch (basic and acidic residues) spans 1395–1407 (LETEGHGMDRKTE). The disordered stretch occupies residues 1395-1493 (LETEGHGMDR…SSSGPRTFYP (99 aa)). A phosphoserine mark is found at serine 1408, serine 1409, serine 1430, serine 1449, and serine 1451. The span at 1417 to 1436 (KSQGGSSPLTRENSTFSIND) shows a compositional bias: polar residues. Low complexity-rich tracts occupy residues 1437–1451 (ATSHTSTMSSRHSAS) and 1471–1486 (SSQLAPSFSSSSSSSS). Phosphoserine is present on residues serine 1546 and serine 1567. Residues 1567–1595 (SPTPESQKNFKFHGLSSPQSPFPSTPTSR) are disordered. Threonine 1569 is subject to Phosphothreonine. A phosphoserine mark is found at serine 1572, serine 1583, serine 1586, serine 1603, and serine 1606. At arginine 1619 the chain carries Asymmetric dimethylarginine. 8 positions are modified to phosphoserine: serine 1621, serine 1665, serine 1668, serine 1726, serine 1729, serine 1746, serine 1747, and serine 1752. Positions 1753-1813 (PTLASKVDQL…ASDKLKKFTE (61 aa)) form a coiled coil.

In terms of assembly, interacts (via PDZ domain) with EPHA4 (via PDZ motif); controls neuronal morphology through regulation of the RAP1 (RAP1A or RAP1B) and RAP2 (RAP2A, RAP2B or RAP2C) GTPases. Interacts with DLG4, PDLIM5, PDLIM7 and LZTS3. Interacts with the actin cytoskeleton. Post-translationally, ubiquitinated and degraded by the SCF(BTRC) following phosphorylation by PLK2. In terms of processing, phosphorylated at Ser-1367 by CDK5, creating a docking site for the POLO box domains of PLK2. Subsequently, PLK2 binds and phosphorylates SIPA1L1, leading to ubiquitination and degradation by the proteasome. Detected in brain (at protein level).

The protein localises to the cytoplasm. It is found in the cytoskeleton. It localises to the postsynaptic density. The protein resides in the synapse. Its subcellular location is the synaptosome. Its function is as follows. Stimulates the GTPase activity of RAP2A. Promotes reorganization of the actin cytoskeleton and recruits DLG4 to F-actin. Contributes to the regulation of dendritic spine morphogenesis. This is Signal-induced proliferation-associated 1-like protein 1 (Sipa1l1) from Rattus norvegicus (Rat).